Here is an 806-residue protein sequence, read N- to C-terminus: Acetyl-CoA decarbonylase/synthase complex subunit alpha 1 (806 aa).

Residues Cys-73, Cys-76, Cys-77, Cys-79, Cys-84, and Cys-94 each contribute to the [4Fe-4S] cluster site. His-117 is a CO binding site. [Ni-4Fe-4S] cluster-binding residues include His-250, Cys-278, and Cys-323. 4Fe-4S ferredoxin-type domains lie at 407–436 (DEEFADWVAKCADCGACMIACPEELDIPEA) and 446–475 (SYLEELHDQCIGCRRCEQVCKKEIPILNII). 8 residues coordinate [4Fe-4S] cluster: Cys-417, Cys-420, Cys-423, Cys-427, Cys-455, Cys-458, Cys-461, and Cys-465. [Ni-4Fe-4S] cluster contacts are provided by Cys-523, Cys-552, and Cys-587.

The protein belongs to the Ni-containing carbon monoxide dehydrogenase family. As to quaternary structure, heterotetramer of two alpha and two epsilon subunits. The ACDS complex is made up of alpha, epsilon, beta, gamma and delta subunits with a probable stoichiometry of (alpha(2)epsilon(2))(4)-beta(8)-(gamma(1)delta(1))(8). [4Fe-4S] cluster is required as a cofactor. [Ni-4Fe-4S] cluster serves as cofactor.

It carries out the reaction CO + 2 oxidized [2Fe-2S]-[ferredoxin] + H2O = 2 reduced [2Fe-2S]-[ferredoxin] + CO2 + 2 H(+). Its pathway is one-carbon metabolism; methanogenesis from acetate. In terms of biological role, part of the ACDS complex that catalyzes the reversible cleavage of acetyl-CoA, allowing growth on acetate as sole source of carbon and energy. The alpha-epsilon subcomponent functions as a carbon monoxide dehydrogenase. The polypeptide is Acetyl-CoA decarbonylase/synthase complex subunit alpha 1 (Methanosarcina acetivorans (strain ATCC 35395 / DSM 2834 / JCM 12185 / C2A)).